The primary structure comprises 507 residues: Maturase K (507 aa).

This sequence belongs to the intron maturase 2 family. MatK subfamily.

The protein resides in the plastid. It is found in the chloroplast. Functionally, usually encoded in the trnK tRNA gene intron. Probably assists in splicing its own and other chloroplast group II introns. This is Maturase K from Lens ervoides (Beaded lentil).